The primary structure comprises 273 residues: uncharacterized protein (273 aa).

The chain crosses the membrane as a helical span at residues 7-25 (FFRWAFLIATVYVAYYFLV). Disordered stretches follow at residues 34–154 (KPQK…LKMK) and 168–273 (LHNS…DSLW). Residues 36–54 (QKSKLTKLGKQKQRQKQKN) show a composition bias toward basic residues. The segment covering 55–91 (TKKDTLVNRETPSKKSQKLETSDALKSKSKDSSKKEP) has biased composition (basic and acidic residues). Over residues 92 to 101 (VVVPKKGTPK) the composition is skewed to low complexity. Basic and acidic residues predominate over residues 115 to 144 (PKKEKLVGKNPAEKEDTTDVEDTQKLEQKH). A compositionally biased stretch (polar residues) spans 145 to 154 (STTPSSLKMK). Over residues 201–212 (KRQRQNQQKKLR) the composition is skewed to basic residues. Positions 213-240 (AKEMQELADEEQRRRLAAHRKELHEANR) are enriched in basic and acidic residues. The span at 245–266 (LNNSSRSAYSYINNGQAGSSKG) shows a compositional bias: polar residues.

Its subcellular location is the cytoplasm. It is found in the membrane. This is an uncharacterized protein from Schizosaccharomyces pombe (strain 972 / ATCC 24843) (Fission yeast).